The following is a 35-amino-acid chain: Tau-theraphotoxin-Pc1b (35 aa).

3 cysteine pairs are disulfide-bonded: C3/C17, C10/C22, and C16/C29. Residue F35 is modified to Phenylalanine amide.

The protein belongs to the neurotoxin 10 (Hwtx-1) family. 62 (Vatx) subfamily. Expressed by the venom gland.

The protein resides in the secreted. Its function is as follows. Selectively activates the mammalian capsaicin receptor TRPV1, a non-selective cation channel expressed by sensory neurons of the pain pathway. Is more potent than VaTx1, but less potent than VaTx3. Interacts with distinct regions of the channel than capsaicin, since it only acts on the extracellular face of the channel, and capsaicin binds to the cytosolic side. Also activates avian TRPV1, which is insensitive to capsaicin. Produce weak inhibition on potassium channels Kv2.1/KCNB1. The protein is Tau-theraphotoxin-Pc1b of Psalmopoeus cambridgei (Trinidad chevron tarantula).